The sequence spans 378 residues: Probable serine/threonine-protein kinase PBL7 (378 aa).

The tract at residues 1–49 (MGWIPCSGKSSGRNKTRRNGDHKLDRKSSDCSVSTSEKSRAKSSLSESK) is disordered. G2 carries the N-myristoyl glycine lipid modification. Positions 18–29 (RNGDHKLDRKSS) are enriched in basic and acidic residues. The segment covering 32–47 (SVSTSEKSRAKSSLSE) has biased composition (low complexity). Position 62 is a phosphothreonine (T62). In terms of domain architecture, Protein kinase spans 73 to 350 (FRKECLIGEG…ADVVTALSYL (278 aa)). Residues 79 to 87 (IGEGGFGRV) and K102 contribute to the ATP site. At Y147 the chain carries Phosphotyrosine. The active-site Proton acceptor is D200. Residues S204 and S234 each carry the phosphoserine modification. 2 positions are modified to phosphothreonine: T235 and T240. Y248 carries the post-translational modification Phosphotyrosine.

The protein belongs to the protein kinase superfamily. Ser/Thr protein kinase family. In terms of assembly, interacts with BSU1 and BSL1. Phosphorylated at Ser-43, Ser-46 and Ser-234. Widely expressed.

It is found in the cell membrane. The enzyme catalyses L-seryl-[protein] + ATP = O-phospho-L-seryl-[protein] + ADP + H(+). The catalysed reaction is L-threonyl-[protein] + ATP = O-phospho-L-threonyl-[protein] + ADP + H(+). Its function is as follows. Serine/threonine-protein kinase involved in the positive regulation of brassinosteroid (BR) signaling and plant growth. Phosphorylates both BSU1 and BSL1 in vitro. The sequence is that of Probable serine/threonine-protein kinase PBL7 from Arabidopsis thaliana (Mouse-ear cress).